Reading from the N-terminus, the 158-residue chain is Na(+)/H(+) antiporter subunit E (158 aa).

2 helical membrane-spanning segments follow: residues 22–41 (YTAV…LFVL) and 54–76 (IWAI…IDVI).

It belongs to the CPA3 antiporters (TC 2.A.63) subunit E family. Forms a heterooligomeric complex that consists of seven subunits: MrpA, MrpB, MrpC, MrpD, MrpE, MrpF and MrpG.

It localises to the cell membrane. Functionally, mnh complex is a Na(+)Li(+)/H(+) antiporter involved in Na(+) and/or Li(+) excretion and Na(+) resistance. Na(+)/H(+) antiport consumes a transmembrane electrical potential, and is thus inferred to be electrogenic. Does not transport K(+), Ca(2+) or Mg(2+). Mrp complex is a Na(+)/H(+) antiporter involved in Na(+) excretion and Na(+) resistance. This Alkalihalophilus pseudofirmus (strain ATCC BAA-2126 / JCM 17055 / OF4) (Bacillus pseudofirmus) protein is Na(+)/H(+) antiporter subunit E (mrpE).